The chain runs to 122 residues: Large ribosomal subunit protein uL14 (122 aa).

It belongs to the universal ribosomal protein uL14 family. As to quaternary structure, part of the 50S ribosomal subunit. Forms a cluster with proteins L3 and L19. In the 70S ribosome, L14 and L19 interact and together make contacts with the 16S rRNA in bridges B5 and B8.

In terms of biological role, binds to 23S rRNA. Forms part of two intersubunit bridges in the 70S ribosome. In Lactobacillus acidophilus (strain ATCC 700396 / NCK56 / N2 / NCFM), this protein is Large ribosomal subunit protein uL14.